Consider the following 387-residue polypeptide: Phosphoglycerate kinase (387 aa).

Substrate-binding positions include 21-23 (DLN), Arg36, 59-62 (HLGR), Arg113, and Arg146. Residues Lys197, Glu314, and 340–343 (GGDT) contribute to the ATP site.

It belongs to the phosphoglycerate kinase family. In terms of assembly, monomer.

It is found in the cytoplasm. The enzyme catalyses (2R)-3-phosphoglycerate + ATP = (2R)-3-phospho-glyceroyl phosphate + ADP. It functions in the pathway carbohydrate degradation; glycolysis; pyruvate from D-glyceraldehyde 3-phosphate: step 2/5. The sequence is that of Phosphoglycerate kinase from Yersinia pestis bv. Antiqua (strain Antiqua).